The chain runs to 609 residues: Glutamine--fructose-6-phosphate aminotransferase [isomerizing] (609 aa).

The Nucleophile; for GATase activity role is filled by Cys-2. In terms of domain architecture, Glutamine amidotransferase type-2 spans 2-218 (CGIVGAIAQR…EGDIAEITRR (217 aa)). 2 consecutive SIS domains span residues 286–426 (ADEL…LKGL) and 458–599 (LAED…VDQP). Catalysis depends on Lys-604, which acts as the For Fru-6P isomerization activity.

Homodimer.

The protein localises to the cytoplasm. The catalysed reaction is D-fructose 6-phosphate + L-glutamine = D-glucosamine 6-phosphate + L-glutamate. Its function is as follows. Catalyzes the first step in hexosamine metabolism, converting fructose-6P into glucosamine-6P using glutamine as a nitrogen source. In Escherichia coli O6:H1 (strain CFT073 / ATCC 700928 / UPEC), this protein is Glutamine--fructose-6-phosphate aminotransferase [isomerizing].